A 148-amino-acid chain; its full sequence is Large ribosomal subunit protein uL15 (148 aa).

A disordered region spans residues Met1 to Leu57. Residues Lys10–Gly20 show a composition bias toward basic residues. Gly residues predominate over residues Ile23–Met35.

This sequence belongs to the universal ribosomal protein uL15 family. In terms of assembly, part of the 50S ribosomal subunit.

Functionally, binds to the 23S rRNA. The protein is Large ribosomal subunit protein uL15 of Trichormus variabilis (strain ATCC 29413 / PCC 7937) (Anabaena variabilis).